The primary structure comprises 62 residues: Temporin-CDYb (62 aa).

The signal sequence occupies residues 1–22; the sequence is MFTLKKSLLLLFFLGTINLSLC. Positions 23–45 are excised as a propeptide; it reads EEERDADEEERRDDPEERAVQVE. A Leucine amide modification is found at leucine 60.

The protein belongs to the frog skin active peptide (FSAP) family. Temporin subfamily. In terms of tissue distribution, expressed by the skin glands.

The protein resides in the secreted. In terms of biological role, antimicrobial peptide. Has low activity against the Gram-positive bacterium S.aureus (MIC&gt;100 uM) and the Gram-negative bacterium E.coli (MIC&gt;100 uM). Has weak hemolytic activity against human erythrocytes. In Rana dybowskii (Dybovsky's frog), this protein is Temporin-CDYb.